The chain runs to 294 residues: tRNA pseudouridine synthase B (294 aa).

The Nucleophile role is filled by D39.

Belongs to the pseudouridine synthase TruB family. Type 1 subfamily.

It carries out the reaction uridine(55) in tRNA = pseudouridine(55) in tRNA. Its function is as follows. Responsible for synthesis of pseudouridine from uracil-55 in the psi GC loop of transfer RNAs. This is tRNA pseudouridine synthase B from Streptococcus pyogenes serotype M2 (strain MGAS10270).